We begin with the raw amino-acid sequence, 408 residues long: FAD-dependent monooxygenase nscC (408 aa).

Positions 1-20 are cleaved as a signal peptide; sequence MAPPLPILIIGAGISGLTTA. FAD contacts are provided by Glu-34 and Ala-45. N-linked (GlcNAc...) asparagine glycans are attached at residues Asn-91 and Asn-103. Arg-119 contributes to the FAD binding site. 2 N-linked (GlcNAc...) asparagine glycosylation sites follow: Asn-170 and Asn-231. Residues Asp-328 and Gly-341 each contribute to the FAD site.

Belongs to the paxM FAD-dependent monooxygenase family. FAD is required as a cofactor.

Its pathway is secondary metabolite biosynthesis. Functionally, FAD-dependent monooxygenase; part of the gene cluster that mediates the biosynthesis of neosartoricin, a prenylated anthracenone that exhibits T-cell antiproliferative activity, suggestive of a physiological role as an immunosuppressive agent. The non-reducing polyketide synthase nscA probably synthesizes and cyclizes the decaketide backbone. The hydrolase nscB then mediates the product release through hydrolysis followed by spontaneous decarboxylation. The prenyltransferase nscD catalyzes the addition of the dimethylallyl group to the aromatic C5. The FAD-dependent monooxygenase nscC is then responsible for the stereospecific hydroxylation at C2. There is no gene encoding O-acetyltransferase in the nsc gene cluster; thus, the last step of 2-O-acetylation leading to neosartoricin may be catalyzed by an unidentified O-acetyltransferase. The sequence is that of FAD-dependent monooxygenase nscC from Neosartorya fischeri (strain ATCC 1020 / DSM 3700 / CBS 544.65 / FGSC A1164 / JCM 1740 / NRRL 181 / WB 181) (Aspergillus fischerianus).